Consider the following 461-residue polypeptide: Diacylglycerol O-acyltransferase 1 (461 aa).

The disordered stretch occupies residues 1-38 (MQDSMDDSLREAEGRQDDSEVSSGTTLGSSTPEDSGVT). Residues 1–112 (MQDSMDDSLR…TLVVAWHTSS (112 aa)) lie on the Cytoplasmic side of the membrane. Over residues 7–18 (DSLREAEGRQDD) the composition is skewed to basic and acidic residues. Polar residues predominate over residues 21-33 (VSSGTTLGSSTPE). A helical transmembrane segment spans residues 113–133 (FIYMTVLVLFLAANPLMWWFM). Over 134 to 230 (VPYMVYYVWN…ARPQVATGPR (97 aa)) the chain is Lumenal. A helical transmembrane segment spans residues 231–251 (YIFGYHPHGVGALGAFGAIAT). The Cytoplasmic segment spans residues 252–258 (EGCNWSK). A helical membrane pass occupies residues 259–279 (VFAGIPACLCTLVNQFQIPIY). Residues 280-332 (RDYLLGLGCTSVARKNVLKVLEQNYSVCIVVGGAQEALLSRVGSTELVLNKRK) are Lumenal-facing. A helical membrane pass occupies residues 333–353 (GFIKLALETGNVNLVPIYAFG). The Cytoplasmic segment spans residues 354 to 461 (ETDCFNVLDT…YAGKELKIVE (108 aa)).

Belongs to the diacylglycerol acyltransferase family.

Its subcellular location is the lipid droplet. The protein resides in the endoplasmic reticulum membrane. The catalysed reaction is an acyl-CoA + a 1,2-diacyl-sn-glycerol = a triacyl-sn-glycerol + CoA. The enzyme catalyses a 2-acylglycerol + an acyl-CoA = a 1,2-diacyl-sn-glycerol + CoA. Its pathway is glycerolipid metabolism; triacylglycerol biosynthesis. In terms of biological role, catalyzes the terminal and only committed step in triacylglycerol (TAG) synthesis by using diacylglycerol (DAG) and fatty acyl-CoA as substrates. Required for storage lipid synthesis. Major DAG esterifying enzyme in stationary phase when TAG production is particularly active. Involved in lipid particle synthesis from the endoplasmic reticulum, promoting localized TAG production at discrete ER subdomains. The sequence is that of Diacylglycerol O-acyltransferase 1 (DGA1) from Eremothecium gossypii (strain ATCC 10895 / CBS 109.51 / FGSC 9923 / NRRL Y-1056) (Yeast).